The chain runs to 283 residues: Pantothenate synthetase (283 aa).

Position 30 to 37 (30 to 37 (MGNLHDGH)) interacts with ATP. His37 serves as the catalytic Proton donor. A (R)-pantoate-binding site is contributed by Gln61. Beta-alanine is bound at residue Gln61. ATP is bound at residue 149–152 (GEKD). Gln155 contacts (R)-pantoate. 186-189 (LSSR) lines the ATP pocket.

This sequence belongs to the pantothenate synthetase family. As to quaternary structure, homodimer.

The protein localises to the cytoplasm. It catalyses the reaction (R)-pantoate + beta-alanine + ATP = (R)-pantothenate + AMP + diphosphate + H(+). Its pathway is cofactor biosynthesis; (R)-pantothenate biosynthesis; (R)-pantothenate from (R)-pantoate and beta-alanine: step 1/1. Catalyzes the condensation of pantoate with beta-alanine in an ATP-dependent reaction via a pantoyl-adenylate intermediate. The sequence is that of Pantothenate synthetase from Shigella dysenteriae serotype 1 (strain Sd197).